The primary structure comprises 319 residues: Sliding-clamp-loader large subunit (319 aa).

ATP contacts are provided by residues 12 to 15 (EQKY), Ile24, 53 to 58 (GTGKTT), and Arg205.

Belongs to the Tevenvirinae sliding-clamp-loader large subunit family. As to quaternary structure, the sliding-clamp-loader consists of 4 large subunits and 1 small subunit. Interacts with the sliding clamp; this interaction allows the sliding-clamp-loader to open the sliding clamp. Part of the replicase complex that includes the DNA polymerase, the polymerase clamp, the clamp loader complex, the single-stranded DNA binding protein, the primase, the helicase and the helicase assembly factor.

In terms of biological role, forms the sliding-clamp-loader together with the small subunit. Functions as an ATPase enzyme. The clamp loader holds the clamp in an open conformation and places it onto the DNA. 4 ATP molecules must bind to the sliding-clamp-loader before the latter can open the sliding clamp. ATP hydrolysis triggers the detachment of the sliding clamp from the sliding-clamp-loader, freeing the sliding clamp to track along DNA. The protein is Sliding-clamp-loader large subunit (44) of Enterobacteria phage T4 (Bacteriophage T4).